The primary structure comprises 241 residues: Transcription initiation factor TFIID subunit 14 (241 aa).

The YEATS domain occupies 1-137 (MTTVKRTVRL…PGLLKALTAT (137 aa)). Residues 141-169 (PGYSDEGEEARKDKRKNESEVGAGKKKAK) form a disordered region. Residues 149-159 (EARKDKRKNES) show a composition bias toward basic and acidic residues.

Belongs to the TAF14 family. Component of the fcp1/TFIIF/polII complex via interaction of tfg3 with both tfg1/TFIIF-alpha and tfg2/TFIIF-beta subunits. Component of the SWI/SNF global transcription activator complex composed of at least arp9, arp42, snf5, snf22, snf30, sbf59, sol1, ssr1, ssr2, ssr3, ssr4 and tfg3. Also interacts with the TATA-binding protein (TBP). Component of the mst2 complex composed of at least eaf6, mst2, nto1, pdp3, ptf1, ptf2 and tfg3.

It localises to the nucleus. The protein localises to the nucleoplasm. Functions as a component of the DNA-binding general transcription factor complex TFIID, and the RNA polymerase II associated general transcription factor complex TFIIF. Binding of TFIID to a promoter (with or without TATA element) is the initial step in preinitiation complex (PIC) formation. TFIID plays a key role in the regulation of gene expression by RNA polymerase II through different activities such as transcription activator interaction, core promoter recognition and selectivity, TFIIA and TFIIB interaction, facilitation of DNA opening and initiation of transcription. TFIIF is essential for the initiation of transcription by RNA polymerase II. TFIIF functions include the recruitment of RNA polymerase II to the promoter bound DNA-TBP-TFIIB complex, decreasing the affinity of RNA polymerase II for non-specific DNA, allowing for the subsequent recruitment of TFIIE and TFIIH, and facilitating RNA polymerase II elongation. The TAF14 subunit has stimulatory activity. Component of the SWI/SNF complex, an ATP-dependent chromatin remodeling complex, required for the positive and negative regulation of gene expression of a large number of genes. It changes chromatin structure by altering DNA-histone contacts within a nucleosome, leading eventually to a change in nucleosome position, thus facilitating or repressing binding of gene-specific transcription factors. Component of the mst2 complex which is a highly specific H3 lysine 14 (H3K14) acetyltransferase that functions together with gcn5 to regulate global levels of H3K14 acetylation (H3K14ac), critical for DNA damage checkpoint activation. In Schizosaccharomyces pombe (strain 972 / ATCC 24843) (Fission yeast), this protein is Transcription initiation factor TFIID subunit 14 (tfg3).